Consider the following 154-residue polypeptide: Myoglobin (154 aa).

Residues 2 to 148 form the Globin domain; that stretch reads GLSEAEWQLV…FRKDIAAKYK (147 aa). Phosphoserine is present on S4. Residue H65 coordinates nitrite. H65 contacts O2. T68 bears the Phosphothreonine mark. H94 contacts heme b.

Belongs to the globin family. In terms of assembly, monomeric.

Its subcellular location is the cytoplasm. It localises to the sarcoplasm. The catalysed reaction is Fe(III)-heme b-[protein] + nitric oxide + H2O = Fe(II)-heme b-[protein] + nitrite + 2 H(+). The enzyme catalyses H2O2 + AH2 = A + 2 H2O. Its function is as follows. Monomeric heme protein which primary function is to store oxygen and facilitate its diffusion within muscle tissues. Reversibly binds oxygen through a pentacoordinated heme iron and enables its timely and efficient release as needed during periods of heightened demand. Depending on the oxidative conditions of tissues and cells, and in addition to its ability to bind oxygen, it also has a nitrite reductase activity whereby it regulates the production of bioactive nitric oxide. Under stress conditions, like hypoxia and anoxia, it also protects cells against reactive oxygen species thanks to its pseudoperoxidase activity. This is Myoglobin (MB) from Ziphius cavirostris (Cuvier's beaked whale).